The sequence spans 245 residues: Protein canopy homolog 4 (245 aa).

A signal peptide spans 1–27; it reads MCGLRFIMGPVRLEILLFILAAYGAWA. 3 disulfide bridges follow: C44–C202, C47–C190, and C100–C162. The tract at residues 207–245 is disordered; sequence WTGKEKISDGQEEADDEEEEEEEEITKTSGNPKHDPEDL. The stretch at 209–237 forms a coiled coil; that stretch reads GKEKISDGQEEADDEEEEEEEEITKTSGN. Acidic residues predominate over residues 216–230; sequence GQEEADDEEEEEEEE.

The protein belongs to the canopy family. Interacts with TLR4. As to expression, highly expressed in lung, spleen, thymus, and uterus. Moderately expressed in kidney, stomach and placenta. Weakly expressed in brain, heart, liver, small intestine, skeletal muscle and testis.

Its subcellular location is the secreted. Plays a role in the regulation of the cell surface expression of TLR4. In Mus musculus (Mouse), this protein is Protein canopy homolog 4 (Cnpy4).